The following is a 166-amino-acid chain: Small ribosomal subunit protein uS5 (166 aa).

The S5 DRBM domain maps to 11 to 74 (LEDRVVAINR…DAARKNLIEV (64 aa)).

Belongs to the universal ribosomal protein uS5 family. As to quaternary structure, part of the 30S ribosomal subunit. Contacts proteins S4 and S8.

Its function is as follows. With S4 and S12 plays an important role in translational accuracy. Located at the back of the 30S subunit body where it stabilizes the conformation of the head with respect to the body. This chain is Small ribosomal subunit protein uS5, found in Ligilactobacillus salivarius (strain UCC118) (Lactobacillus salivarius).